We begin with the raw amino-acid sequence, 142 residues long: uncharacterized protein (142 aa).

Homodimer.

This is an uncharacterized protein from Bacillus subtilis (strain 168).